A 233-amino-acid polypeptide reads, in one-letter code: Rano class II histocompatibility antigen, A beta chain (233 aa).

The segment at 1–80 (DFVYQFKGLC…DTVCRYNYEE (80 aa)) is beta-1. At 1 to 194 (DFVYQFKGLC…RAQSESAQSK (194 aa)) the chain is on the extracellular side. The N-linked (GlcNAc...) asparagine glycan is linked to Asn-14. Positions 81 to 184 (TEVPTSLRRL…SLESPVTVEW (104 aa)) are beta-2. One can recognise an Ig-like C1-type domain in the interval 93–181 (PNVAISLSRT…DHASLESPVT (89 aa)). The tract at residues 185–194 (RAQSESAQSK) is connecting peptide. Residues 195–215 (MLSGIGGLVLGVIFLGLGLFI) form a helical membrane-spanning segment. The Cytoplasmic portion of the chain corresponds to 216 to 233 (RHKRQKGPQGPPPAGLLQ).

The protein belongs to the MHC class II family.

The protein localises to the membrane. In terms of biological role, involved in the presentation of foreign antigens to the immune system. The protein is Rano class II histocompatibility antigen, A beta chain (RT1-B) of Rattus norvegicus (Rat).